Reading from the N-terminus, the 151-residue chain is MKKIDVKILDPRIGTEFPLPTYATIGSAGLDLRALVDEGFEVQPGETKLISTGLSIYIADPNLAAVILPRSGLGHKNGIVLGNLVGLIDSDYQGPLMVSLWNRSDKPFKIEIGDRIAQLVFVPVVQAEFNIVEEFQQTDRGNGGFGHSGKK.

Residues 70–72, Asn-83, 87–89, and Met-97 each bind substrate; these read RSG and LID.

This sequence belongs to the dUTPase family. It depends on Mg(2+) as a cofactor.

It carries out the reaction dUTP + H2O = dUMP + diphosphate + H(+). Its pathway is pyrimidine metabolism; dUMP biosynthesis; dUMP from dCTP (dUTP route): step 2/2. In terms of biological role, this enzyme is involved in nucleotide metabolism: it produces dUMP, the immediate precursor of thymidine nucleotides and it decreases the intracellular concentration of dUTP so that uracil cannot be incorporated into DNA. In Histophilus somni (strain 129Pt) (Haemophilus somnus), this protein is Deoxyuridine 5'-triphosphate nucleotidohydrolase.